The sequence spans 155 residues: SsrA-binding protein (155 aa).

Belongs to the SmpB family.

The protein resides in the cytoplasm. In terms of biological role, required for rescue of stalled ribosomes mediated by trans-translation. Binds to transfer-messenger RNA (tmRNA), required for stable association of tmRNA with ribosomes. tmRNA and SmpB together mimic tRNA shape, replacing the anticodon stem-loop with SmpB. tmRNA is encoded by the ssrA gene; the 2 termini fold to resemble tRNA(Ala) and it encodes a 'tag peptide', a short internal open reading frame. During trans-translation Ala-aminoacylated tmRNA acts like a tRNA, entering the A-site of stalled ribosomes, displacing the stalled mRNA. The ribosome then switches to translate the ORF on the tmRNA; the nascent peptide is terminated with the 'tag peptide' encoded by the tmRNA and targeted for degradation. The ribosome is freed to recommence translation, which seems to be the essential function of trans-translation. The chain is SsrA-binding protein from Bacillus cereus (strain G9842).